We begin with the raw amino-acid sequence, 585 residues long: Formate--tetrahydrofolate ligase (585 aa).

An ATP-binding site is contributed by 74 to 81 (TPLGEGKT).

The protein belongs to the formate--tetrahydrofolate ligase family.

It carries out the reaction (6S)-5,6,7,8-tetrahydrofolate + formate + ATP = (6R)-10-formyltetrahydrofolate + ADP + phosphate. It functions in the pathway one-carbon metabolism; tetrahydrofolate interconversion. This chain is Formate--tetrahydrofolate ligase, found in Yersinia enterocolitica serotype O:8 / biotype 1B (strain NCTC 13174 / 8081).